The primary structure comprises 192 residues: Endoribonuclease YbeY (192 aa).

His-109, His-113, and His-119 together coordinate Zn(2+). The interval 142–192 (VGAALREGGPARAAETETSWTRSPTSTSTRSPSGSTARGTRARSSRAGSGR) is disordered. The span at 159 to 180 (TSWTRSPTSTSTRSPSGSTARG) shows a compositional bias: low complexity.

This sequence belongs to the endoribonuclease YbeY family. Requires Zn(2+) as cofactor.

It localises to the cytoplasm. Its function is as follows. Single strand-specific metallo-endoribonuclease involved in late-stage 70S ribosome quality control and in maturation of the 3' terminus of the 16S rRNA. In Anaeromyxobacter sp. (strain Fw109-5), this protein is Endoribonuclease YbeY.